Reading from the N-terminus, the 368-residue chain is Putative zinc metalloprotease Cj1068 (368 aa).

Zn(2+) is bound at residue H36. Residue E37 is part of the active site. Position 40 (H40) interacts with Zn(2+). The next 3 helical transmembrane spans lie at 112-134 (IYILFAGPFFNLILAFFLYIIIG), 291-313 (FTLLLFITALISINLGILNLLPI), and 338-360 (TFEYLSYTGMAILLSLMLFATYN). A PDZ domain is found at 126–197 (AFFLYIIIGN…LKILINREGK (72 aa)).

Belongs to the peptidase M50B family. The cofactor is Zn(2+).

It is found in the cell inner membrane. This Campylobacter jejuni subsp. jejuni serotype O:2 (strain ATCC 700819 / NCTC 11168) protein is Putative zinc metalloprotease Cj1068.